Reading from the N-terminus, the 426-residue chain is MSKKSVLITSLMLFSMFFGAGNLIFPPMLGLSAGTNYLPAILGFLATSVLLPVLAIIAVVLSGENVKDMASRGGKIFGLVFPIAAYLSIGAFYALPRTGAVSYSTAVGVDNALYSGLFNFVFFAVALALSWNPNGIADKLGKWLTPALLTLIVVLVVLSVAKLDGTPGEPSSAYAQQPAGAGLLEGYMTMDAIAALAFGIVVISAFKYQKVNKVRTATVVSAFIAGILLALVYLGLGSIGQVVNGEFADGTAILNYAALSTMGQAGRIMFVAILILACMTTAVGLISATSEFFNSLLPGVKYHVWATVFALISFGVATMGLDTVLAVAAPVISFIYPSAITLVFLSLIEPLLFRLKWTYLFGIWTAVVWALFMSIPALNPFIEWAPLHSMSLGWVVPVLVASAIGLAIDWNKKGAQSVAKKESISV.

12 helical membrane passes run 11-31 (LMLF…MLGL), 41-61 (ILGF…AVVL), 76-96 (IFGL…YALP), 111-131 (NALY…ALSW), 140-160 (LGKW…VLSV), 186-206 (GYMT…ISAF), 219-239 (VVSA…LGSI), 268-288 (IMFV…LISA), 296-316 (LLPG…SFGV), 324-344 (VLAV…TLVF), 358-378 (TYLF…IPAL), and 390-410 (MSLG…AIDW).

Belongs to the branched chain amino acid transporter family.

It is found in the cell membrane. Functionally, branched chain amino acid transport system, which transports isoleucine. This chain is Branched-chain amino acid permease BrnQ, found in Corynebacterium glutamicum (strain ATCC 13032 / DSM 20300 / JCM 1318 / BCRC 11384 / CCUG 27702 / LMG 3730 / NBRC 12168 / NCIMB 10025 / NRRL B-2784 / 534).